The sequence spans 194 residues: Coiled-coil domain-containing protein 184 (194 aa).

Positions 39–68 (GMKELMEHLKAQLQALFEDVRAMRGALDEQ) form a coiled coil. The segment at 101-176 (GLGVVGGKGS…LLGGDGPLVE (76 aa)) is disordered. Acidic residues predominate over residues 135 to 145 (PEDEEEEEEEK).

The protein is Coiled-coil domain-containing protein 184 (CCDC184) of Homo sapiens (Human).